The primary structure comprises 926 residues: Progesterone receptor (926 aa).

The tract at residues 1–48 is disordered; that stretch reads MTELQAKDPQVLHTSGASPSPPHIGSPLLARLDSGPFQGSQHSDVSSV. The interval 1 to 165 is AF3; mediates transcriptional activation (in isoform B); the sequence is MTELQAKDPQ…PATKGLLSPL (165 aa). Residues 1–559 form a modulating, Pro-Rich region; that stretch reads MTELQAKDPQ…YGFDSLPQKI (559 aa). Lys-7 participates in a covalent cross-link: Glycyl lysine isopeptide (Lys-Gly) (interchain with G-Cter in SUMO). At Ser-20 the chain carries Phosphoserine. Residues 56–60 carry the LXXL motif 1 motif; that stretch reads LDGLL. Ser-82 bears the Phosphoserine mark. The LXXL motif 1 motif lies at 116 to 120; it reads LDSLL. Phosphoserine occurs at positions 131 and 163. The mediates transcriptional transrepression (in isoform A) stretch occupies residues 166-305; it reads MSRPEIKAGD…LATTVVDFIH (140 aa). Residues 168 to 256 form a disordered region; it reads RPEIKAGDSS…GTGSGGGVAA (89 aa). Residues 184–188 carry the Nuclear localization signal motif; sequence KVLPK. Ser-191 and Ser-214 each carry phosphoserine. Position 294 is a phosphoserine; by MAPK1 (Ser-294). Residues 327-364 form a disordered region; the sequence is DSYDGGATAQGPFAPPRGSPSAPSPPVPCGDFPDCTYP. The span at 339–354 shows a compositional bias: pro residues; that stretch reads FAPPRGSPSAPSPPVP. Ser-345 carries the phosphoserine; by MAPK modification. Lys-388 participates in a covalent cross-link: Glycyl lysine isopeptide (Lys-Gly) (interchain with G-Cter in SUMO); alternate. Lys-388 participates in a covalent cross-link: Glycyl lysine isopeptide (Lys-Gly) (interchain with G-Cter in ubiquitin); alternate. Residues 391–447 are disordered; sequence EEGADAAVRSPRPYLSAGASSSTFPDFPLAPAPQRAPSSRPGEAAVAGGPSSAAVSP. Ser-400 is subject to Phosphoserine; by CDK2. Over residues 422-447 the composition is skewed to low complexity; sequence APQRAPSSRPGEAAVAGGPSSAAVSP. Residues 453–539 are AF1; mediates transcriptional activation; sequence SALECILYKA…VYPPYLNYLR (87 aa). Lys-524 participates in a covalent cross-link: Glycyl lysine isopeptide (Lys-Gly) (interchain with G-Cter in SUMO). Residues 557–632 constitute a DNA-binding region (nuclear receptor); the sequence is QKICLICGDE…AGMVLGGRKF (76 aa). NR C4-type zinc fingers lie at residues 560–580 and 596–615; these read CLIC…CGSC and CAGR…CPAC. Ser-669 is subject to Phosphoserine. One can recognise an NR LBD domain in the interval 672-906; it reads QEIQLVPPLI…EFPEMMSEVI (235 aa). The tract at residues 673-926 is AF2; mediates transcriptional activation; sequence EIQLVPPLIN…MVKPLLFHKK (254 aa). Arg-759 serves as a coordination point for progesterone.

The protein belongs to the nuclear hormone receptor family. NR3 subfamily. As to quaternary structure, interacts with SMARD1 and UNC45A. Interacts with CUEDC2; the interaction promotes ubiquitination, decreases sumoylation, and represses transcriptional activity. Interacts with PIAS3; the interaction promotes sumoylation of PR in a hormone-dependent manner, inhibits DNA-binding, and alters nuclear export. Interacts with SP1; the interaction requires ligand-induced phosphorylation on Ser-294 by ERK1/2 MAPK. Interacts with PRMT2. Isoform A interacts with NCOR2. Isoform B (but not isoform A) interacts with NCOA2 and NCOA1. Isoform B (but not isoform A) interacts with KLF9. Phosphorylated on multiple serine sites. Several of these sites are hormone-dependent. Phosphorylation on Ser-294 is highly hormone-dependent and modulates ubiquitination and sumoylation on Lys-388. Phosphorylation on Ser-345 also requires induction by hormone. Basal phosphorylation on Ser-82, Ser-163, Ser-191 and Ser-400 is increased in response to progesterone and can be phosphorylated in vitro by the CDK2-A1 complex. Increased levels of phosphorylation on Ser-400 also in the presence of EGF, heregulin, IGF, PMA and FBS. Phosphorylation at this site by CDK2 is ligand-independent, and increases nuclear translocation and transcriptional activity. Phosphorylation at Ser-163 and Ser-294, but not at Ser-191, is impaired during the G(2)/M phase of the cell cycle. Phosphorylation on Ser-345 by ERK1/2 MAPK is required for interaction with SP1. Post-translationally, sumoylation is hormone-dependent and represses transcriptional activity. Sumoylation on all three sites is enhanced by PIAS3. Desumoylated by SENP1. Sumoylation on Lys-388, the main site of sumoylation, is repressed by ubiquitination on the same site, and modulated by phosphorylation at Ser-294. In terms of processing, ubiquitination is hormone-dependent and represses sumoylation on the same site. Promoted by MAPK-mediated phosphorylation on Ser-294. Ubiquitinated by UBR5, leading to its degradation: UBR5 specifically recognizes and binds ligand-bound PGR when it is not associated with coactivators (NCOAs). In presence of NCOAs, the UBR5-degron is not accessible, preventing its ubiquitination and degradation. Palmitoylated by ZDHHC7 and ZDHHC21. Palmitoylation is required for plasma membrane targeting and for rapid intracellular signaling via ERK and AKT kinases and cAMP generation. As to expression, expression of isoform A and isoform B in mammary epithelial cells is temporally and spatially separated during normal mammary gland development. Isoform A and isoform B are expressed in the pituitary. Isoform A and isoform B are differentially expressed in the ovary and oviduct, and the level of expression is dependent on both the cell type and estrous cycle stage.

It is found in the nucleus. The protein resides in the cytoplasm. The steroid hormones and their receptors are involved in the regulation of eukaryotic gene expression and affect cellular proliferation and differentiation in target tissues. Depending on the isoform, progesterone receptor functions as a transcriptional activator or repressor. Functionally, ligand-dependent transdominant repressor of steroid hormone receptor transcriptional activity including repression of its isoform B, MR and ER. Transrepressional activity may involve recruitment of corepressor NCOR2. Its function is as follows. Transcriptional activator of several progesteron-dependent promoters in a variety of cell types. Involved in activation of SRC-dependent MAPK signaling on hormone stimulation. This Mus musculus (Mouse) protein is Progesterone receptor (Pgr).